The following is a 432-amino-acid chain: UDP-glucose 6-dehydrogenase (432 aa).

Residues 2 to 19 (NITFIGSGYVGLVSGIIM), Val11, Asp30, Lys35, Thr121, and Glu152 each bind NAD(+). Residues 148 to 152 (EFLRE), Lys202, Asn206, 247 to 251 (FLNAG), and Gly255 each bind substrate. Catalysis depends on Cys258, which acts as the Nucleophile. Residue Lys261 participates in NAD(+) binding. Lys319 serves as a coordination point for substrate. An NAD(+)-binding site is contributed by Arg326.

The protein belongs to the UDP-glucose/GDP-mannose dehydrogenase family.

It catalyses the reaction UDP-alpha-D-glucose + 2 NAD(+) + H2O = UDP-alpha-D-glucuronate + 2 NADH + 3 H(+). It participates in nucleotide-sugar biosynthesis; UDP-alpha-D-glucuronate biosynthesis; UDP-alpha-D-glucuronate from UDP-alpha-D-glucose: step 1/1. The chain is UDP-glucose 6-dehydrogenase (udg) from Rickettsia conorii (strain ATCC VR-613 / Malish 7).